The sequence spans 73 residues: Small ribosomal subunit protein bS18 (73 aa).

The protein belongs to the bacterial ribosomal protein bS18 family. As to quaternary structure, part of the 30S ribosomal subunit. Forms a tight heterodimer with protein bS6.

In terms of biological role, binds as a heterodimer with protein bS6 to the central domain of the 16S rRNA, where it helps stabilize the platform of the 30S subunit. This Neorickettsia sennetsu (strain ATCC VR-367 / Miyayama) (Ehrlichia sennetsu) protein is Small ribosomal subunit protein bS18.